The following is a 61-amino-acid chain: [Thr6, Val10, Asp11]-phyllokinin (61 aa).

The N-terminal stretch at 1–22 is a signal peptide; the sequence is MSFLKKSLFLVLFLGLVSFSIC. Residues 23-50 constitute a propeptide that is removed on maturation; sequence EEEKRETEEEENEDEMNEESEEKRESPE. The segment at 24 to 61 is disordered; that stretch reads EEKRETEEEENEDEMNEESEEKRESPERPPGFTPFRVD. Residues 30-42 show a composition bias toward acidic residues; sequence EEEENEDEMNEES.

This sequence belongs to the frog skin active peptide (FSAP) family. Bradykinin-related peptide subfamily. As to expression, expressed by the skin glands.

The protein resides in the secreted. Induces relaxation of rat smooth muscle from tail artery and contraction of that from ileum, urinary bladder and uterus. Binds to both bradykinin receptor B1 (BDKRB1) and B2 (BDKRB2). The sequence is that of [Thr6, Val10, Asp11]-phyllokinin from Agalychnis spurrelli (Gliding leaf frog).